A 695-amino-acid chain; its full sequence is Polyribonucleotide nucleotidyltransferase (695 aa).

Mg(2+) contacts are provided by Asp488 and Asp494. The 60-residue stretch at Pro554–Val613 folds into the KH domain. One can recognise an S1 motif domain in the interval Asn623–Lys690.

It belongs to the polyribonucleotide nucleotidyltransferase family. As to quaternary structure, component of the RNA degradosome, which is a multiprotein complex involved in RNA processing and mRNA degradation. It depends on Mg(2+) as a cofactor.

Its subcellular location is the cytoplasm. The catalysed reaction is RNA(n+1) + phosphate = RNA(n) + a ribonucleoside 5'-diphosphate. Involved in mRNA degradation. Catalyzes the phosphorolysis of single-stranded polyribonucleotides processively in the 3'- to 5'-direction. The chain is Polyribonucleotide nucleotidyltransferase from Vesicomyosocius okutanii subsp. Calyptogena okutanii (strain HA).